We begin with the raw amino-acid sequence, 392 residues long: Chaperone protein DnaJ (392 aa).

In terms of domain architecture, J spans 2 to 67 (DYYTILGVAK…QKRESYDRYG (66 aa)). Residues 149-227 (GVEKELLVSG…CRGQGRIKDK (79 aa)) form a CR-type zinc finger. Positions 162, 165, 179, 182, 201, 204, 215, and 218 each coordinate Zn(2+). CXXCXGXG motif repeat units lie at residues 162–169 (CDACSGSG), 179–186 (CDRCKGSG), 201–208 (CPDCSGEG), and 215–222 (CSECRGQG).

It belongs to the DnaJ family. Homodimer. Zn(2+) is required as a cofactor.

It localises to the cytoplasm. In terms of biological role, participates actively in the response to hyperosmotic and heat shock by preventing the aggregation of stress-denatured proteins and by disaggregating proteins, also in an autonomous, DnaK-independent fashion. Unfolded proteins bind initially to DnaJ; upon interaction with the DnaJ-bound protein, DnaK hydrolyzes its bound ATP, resulting in the formation of a stable complex. GrpE releases ADP from DnaK; ATP binding to DnaK triggers the release of the substrate protein, thus completing the reaction cycle. Several rounds of ATP-dependent interactions between DnaJ, DnaK and GrpE are required for fully efficient folding. Also involved, together with DnaK and GrpE, in the DNA replication of plasmids through activation of initiation proteins. This Chlamydia muridarum (strain MoPn / Nigg) protein is Chaperone protein DnaJ.